The sequence spans 675 residues: MSSQPRKILVTSALPYANGSIHLGHLLEHIQTDIWTRFQRMCGHEIYSVCADDAHGTPVMLKAQELGITPEEMVARTREEHHQDLLDFFVEYDNYHVTHSDENKELSELIYNRLNDAGYISKRTISQLFDPEKNMFLPDRFVKGTCPSCGAEDQNGDSCDNCGATYDPTEMKNPRSVVSGATPILKDSEHFFFDLPQFSDMLQNWLKSDALQSEISNKLEEWFEKGLQQWDISRDAPYFGFEIPGAPNKFFYVWVDAPVGYMASFKNLCDRSGINFDEYWGADSDAELYHFIGKDITYFHCLFWPAMLEGAGFRKPTGVNVHGFVTVNGAKMSKSKGTFIKGRTYLEHLNPEYLRYYFASKLGANVTDIDLNFEDFAQKVNSDLVGKVVNIASRCASFITKRFDGKLSDNVLEPALVAEFQHAQASIAQAFEERQYHKAIREIMALADKANQFIDANAPWVTIKDESKQAFTHDVCSLGINLFRLLMVYLKPVVPKLAEQAEAFLNDDLSWSSAQSVLTGHEINKFKALMQRVDMDKVNAMVDDSKENLAPTVTLDPNSPLAKDPISDTIEFDDFAKIDLRIAKIVVAEHVEKADKLLRLELDLGGETRQVFAGIKSAYQPEDLVGKLTVMVANLAPRKMRFGMSEGMVLAAGPGGKDLWIMEPHEGAQPGMKVK.

Positions 15–25 match the 'HIGH' region motif; that stretch reads PYANGSIHLGH. The Zn(2+) site is built by Cys-146, Cys-149, Cys-159, and Cys-162. The 'KMSKS' region motif lies at 331-335; sequence KMSKS. Lys-334 contributes to the ATP binding site. A tRNA-binding domain is found at 574 to 675; sequence DFAKIDLRIA…EGAQPGMKVK (102 aa).

It belongs to the class-I aminoacyl-tRNA synthetase family. MetG type 1 subfamily. As to quaternary structure, homodimer. It depends on Zn(2+) as a cofactor.

It localises to the cytoplasm. It catalyses the reaction tRNA(Met) + L-methionine + ATP = L-methionyl-tRNA(Met) + AMP + diphosphate. In terms of biological role, is required not only for elongation of protein synthesis but also for the initiation of all mRNA translation through initiator tRNA(fMet) aminoacylation. The sequence is that of Methionine--tRNA ligase from Pseudoalteromonas atlantica (strain T6c / ATCC BAA-1087).